The following is a 373-amino-acid chain: Saccharopine dehydrogenase [NAD(+), L-lysine-forming] (373 aa).

An N-acetylalanine; partial modification is found at Ala2. The L-saccharopine site is built by Arg18 and Lys77. Lys77 (proton acceptor) is an active-site residue. His96 functions as the Proton donor in the catalytic mechanism. An L-saccharopine-binding site is contributed by Gln101. Position 130 (Arg130) interacts with NAD(+). L-saccharopine contacts are provided by Arg131 and Phe135. NAD(+)-binding positions include 203–204, Asp227, Thr231, Tyr251, and Val278; that span reads GR. Cys205 and Cys249 are disulfide-bonded. 279–281 is a binding site for L-saccharopine; that stretch reads SAD. 318-321 is an NAD(+) binding site; the sequence is IDHL. Positions 371–373 match the Microbody targeting signal motif; it reads SRL.

This sequence belongs to the AlaDH/PNT family. In terms of assembly, monomer.

The protein resides in the peroxisome. It catalyses the reaction L-saccharopine + NAD(+) + H2O = L-lysine + 2-oxoglutarate + NADH + H(+). It participates in amino-acid biosynthesis; L-lysine biosynthesis via AAA pathway; L-lysine from L-alpha-aminoadipate (fungal route): step 3/3. With respect to regulation, inhibited by p-chloromercuribenzoate and iodoacetate by modification of the active site cysteine residue. Inhibited by diethyl pyrocarbonate by modification of histidine residues. Inhibited by pyridoxal 5'-phosphate by modification of an essential lysine residue. In terms of biological role, catalyzes the NAD(+)-dependent cleavage of saccharopine to L-lysine and 2-oxoglutarate, the final step in the alpha-aminoadipate (AAA) pathway for lysine biosynthesis. The protein is Saccharopine dehydrogenase [NAD(+), L-lysine-forming] of Saccharomyces cerevisiae (strain ATCC 204508 / S288c) (Baker's yeast).